A 110-amino-acid chain; its full sequence is Competence pilus inhibition repressor (110 aa).

Residues 7-61 (VRFLRKRQGWTQQQLADFSHTSKSNISNLENGNQGYSPAILEYLAKAFNCSVSQI) enclose the HTH cro/C1-type domain. The segment at residues 18-37 (QQQLADFSHTSKSNISNLEN) is a DNA-binding region (H-T-H motif).

Its function is as follows. Represses transcription of the PilB-specific inhibitory protein CpiA. In Acinetobacter baylyi (strain ATCC 33305 / BD413 / ADP1), this protein is Competence pilus inhibition repressor.